Consider the following 463-residue polypeptide: MPGKIGKVVQVIGPVVDIKFDSDSLPNLYNAISIDMGERTLIAEVEQHVGDDIVRTIAMEATEGLKRGMDAVDTEKAISVPVGDQVLGRLFNVLGKPIDNAGEVEAEEIYPIHRPAPSFKDQAVEPEMFETGIKVIDLLAPYQRGGKIGLFGGAGVGKTVLIQELINNIAKEHGGLSVFTGVGERSREGNDLYHEMRESGVIDKTALVFGQMNEPPGARMRVALTGLTMAEYFRDKGQDVLLFIDNIFRFTQAGSEVSALLGRIPSAVGYQPTLATEMGALQERITSTKNGSITSVQAVYVPADDLTDPAPATTFSHLDATTVLSRSIVELGIYPAVDPLESSSRILDPRLVGEEHYNVATKVKNILERYKELQDIIAILGVDELSDEDKAVVSRARKVQRFLSQPFTVGEQFTGMPGKYVSVKETIKGFKEILEGKYDDLPESAFLFIGSVEEAVQKAKSLA.

152 to 159 is a binding site for ATP; that stretch reads GGAGVGKT.

The protein belongs to the ATPase alpha/beta chains family. As to quaternary structure, F-type ATPases have 2 components, CF(1) - the catalytic core - and CF(0) - the membrane proton channel. CF(1) has five subunits: alpha(3), beta(3), gamma(1), delta(1), epsilon(1). CF(0) has three main subunits: a(1), b(2) and c(9-12). The alpha and beta chains form an alternating ring which encloses part of the gamma chain. CF(1) is attached to CF(0) by a central stalk formed by the gamma and epsilon chains, while a peripheral stalk is formed by the delta and b chains.

The protein localises to the cell membrane. The catalysed reaction is ATP + H2O + 4 H(+)(in) = ADP + phosphate + 5 H(+)(out). In terms of biological role, produces ATP from ADP in the presence of a proton gradient across the membrane. The catalytic sites are hosted primarily by the beta subunits. The sequence is that of ATP synthase subunit beta from Clostridium botulinum (strain Eklund 17B / Type B).